The primary structure comprises 138 residues: Large ribosomal subunit protein uL16 (138 aa).

Basic residues predominate over residues 1–17 (MLIPRKVKHRKQHHPRQ). Residues 1-24 (MLIPRKVKHRKQHHPRQRGIASGG) are disordered.

This sequence belongs to the universal ribosomal protein uL16 family. As to quaternary structure, part of the 50S ribosomal subunit.

Binds 23S rRNA and is also seen to make contacts with the A and possibly P site tRNAs. This is Large ribosomal subunit protein uL16 from Mycobacterium ulcerans (strain Agy99).